Here is a 634-residue protein sequence, read N- to C-terminus: MWLQQRLKGLPGLLSSSWARRLLCLLGLLVLLLWFASSGARRAAGGLHLPSWARSEPGAAEPSACLEAATRAWRGLRDRGEAVPLGPGVPALVANGFLALDASNNRLWVTPGEREPAVTPDFVPFVQLRPLNVVAEAGEAVLLLREGLLRRVRCLQLGTPGSGPAAGVPGPASASGLSAGSGRDCVLLQEDFLAHRGRPHVYLQRIQLNNPTERVAALQTVGPTAGPVPKSFTSTLEKVGDHQFLLYSGRSTPLPSGLVHLVVVTSKKLVNRLQVAPKTQLDETVLWVVHISGPIHPQVLKSKGAKELKALQDLARKEMLELLEMPASELLQDHQYLWAQLFSPGVEMKRITDAHTPSGLTVNLTLYYMLSCSPAPLLSPSLSHREREQMEATLNYEDHCFSGHATMHAENLWPGQLSSVQQILQLADLWKLTLQKRGCKGLVKVGAPGILQGMVLSFGGLQFTENHLQFQADPEVLHNSYALHGIRYKNDHINLAVLVDAEGKPYLHVSLESRGQPVKIYACEAGCLHDPVELTSEPGGHTFSVMVTQPITPLLYISTDLTHLQDLRHTLHLKAILAHDEHMAQQDPGLPFLFWFSVASLITLFHLFLFKLIYNEYCGPGAKPLFRSKEDPSV.

A signal peptide spans 1–40; sequence MWLQQRLKGLPGLLSSSWARRLLCLLGLLVLLLWFASSGA. Residues 41–589 lie on the Extracellular side of the membrane; the sequence is RRAAGGLHLP…DEHMAQQDPG (549 aa). N-linked (GlcNAc...) asparagine glycosylation occurs at asparagine 363. The chain crosses the membrane as a helical span at residues 590–610; that stretch reads LPFLFWFSVASLITLFHLFLF. Residues 611–634 lie on the Cytoplasmic side of the membrane; it reads KLIYNEYCGPGAKPLFRSKEDPSV.

It is found in the membrane. This is an uncharacterized protein from Mus musculus (Mouse).